The following is a 201-amino-acid chain: Cell division protein SepF (201 aa).

Residues 27 to 38 show a composition bias toward basic and acidic residues; it reads VQERTSVQRDSR. A disordered region spans residues 27-99; sequence VQERTSVQRD…PRVQNKDSVR (73 aa). Positions 43–54 are enriched in polar residues; the sequence is QEASQRSHMTNS. Residues 72 to 81 are compositionally biased toward basic and acidic residues; the sequence is NRQERQRVQR. The span at 83 to 92 shows a compositional bias: polar residues; sequence NAYQQATPRV.

The protein belongs to the SepF family. In terms of assembly, homodimer. Interacts with FtsZ.

It is found in the cytoplasm. Functionally, cell division protein that is part of the divisome complex and is recruited early to the Z-ring. Probably stimulates Z-ring formation, perhaps through the cross-linking of FtsZ protofilaments. Its function overlaps with FtsA. In Streptococcus agalactiae serotype Ia (strain ATCC 27591 / A909 / CDC SS700), this protein is Cell division protein SepF.